The following is a 332-amino-acid chain: 3-dehydroquinate synthase (332 aa).

Residues 55 to 60, 89 to 93, 113 to 114, lysine 126, lysine 134, and 152 to 155 each bind NAD(+); these read DGEEYK, GVITD, TT, and TLST. Zn(2+)-binding residues include glutamate 167, histidine 226, and histidine 242.

Belongs to the sugar phosphate cyclases superfamily. Dehydroquinate synthase family. The cofactor is NAD(+). Requires Co(2+) as cofactor. Zn(2+) is required as a cofactor.

It localises to the cytoplasm. It catalyses the reaction 7-phospho-2-dehydro-3-deoxy-D-arabino-heptonate = 3-dehydroquinate + phosphate. Its pathway is metabolic intermediate biosynthesis; chorismate biosynthesis; chorismate from D-erythrose 4-phosphate and phosphoenolpyruvate: step 2/7. Functionally, catalyzes the conversion of 3-deoxy-D-arabino-heptulosonate 7-phosphate (DAHP) to dehydroquinate (DHQ). This is 3-dehydroquinate synthase from Pyrococcus abyssi (strain GE5 / Orsay).